A 286-amino-acid polypeptide reads, in one-letter code: Probable transport system permease protein NifC (286 aa).

6 consecutive transmembrane segments (helical) span residues 34-54 (LFLALTAIYFVMLIFPIISMI), 75-95 (IILSFVTSLIALIFTFIIGTP), 114-134 (IFVEIPVVLPPAVAGIALLLA), 152-172 (VIFTSTAVIIAQFFVSSALYV), 216-236 (GLILAWIRSLGEFGATLMFAG), and 257-277 (IKMATAFATILYIMTFVLLLL). An ABC transmembrane type-1 domain is found at 75 to 278 (IILSFVTSLI…IMTFVLLLLV (204 aa)).

This sequence belongs to the binding-protein-dependent transport system permease family. CysTW subfamily.

Its subcellular location is the cell membrane. Functionally, may be involved in molybdenum transport. The sequence is that of Probable transport system permease protein NifC (nifC) from Clostridium pasteurianum.